We begin with the raw amino-acid sequence, 347 residues long: Phenylalanine--tRNA ligase alpha subunit (347 aa).

Glu261 contributes to the Mg(2+) binding site.

The protein belongs to the class-II aminoacyl-tRNA synthetase family. Phe-tRNA synthetase alpha subunit type 1 subfamily. Tetramer of two alpha and two beta subunits. Mg(2+) serves as cofactor.

Its subcellular location is the cytoplasm. The enzyme catalyses tRNA(Phe) + L-phenylalanine + ATP = L-phenylalanyl-tRNA(Phe) + AMP + diphosphate + H(+). The polypeptide is Phenylalanine--tRNA ligase alpha subunit (Streptococcus pyogenes serotype M3 (strain ATCC BAA-595 / MGAS315)).